A 423-amino-acid chain; its full sequence is Cyclin-dependent kinase 14 (423 aa).

A phosphoserine mark is found at Ser-32, Ser-49, and Ser-88. Residues Ser-49–Lys-64 show a composition bias toward polar residues. The tract at residues Ser-49 to Asp-87 is disordered. Positions Tyr-89–Phe-373 constitute a Protein kinase domain. ATP is bound by residues Leu-95–Val-103 and Lys-118. Residue Asp-210 is the Proton acceptor of the active site. The segment at Glu-403–His-423 is disordered. Positions Lys-410 to His-423 are enriched in polar residues.

This sequence belongs to the protein kinase superfamily. CMGC Ser/Thr protein kinase family. CDC2/CDKX subfamily. In terms of assembly, found in a complex with LRP6, CCNY and CAPRIN2 during G2/M stage; CAPRIN2 functions as a scaffold for the complex by binding to CCNY via its N terminus and to CDK14 via its C terminus. Interacts with CCNY; CCNY mediates its recruitment to the plasma membrane and promotes phosphorylation of LRP6. Interacts with CCDN3 and CDKN1A. Interacts with SEPT8. Interacts with 14-3-3 proteina YWHAB, YWHAE, YWHAH and YWHAQ.

Its subcellular location is the cell membrane. The protein resides in the cytoplasm. It localises to the nucleus. It carries out the reaction L-seryl-[protein] + ATP = O-phospho-L-seryl-[protein] + ADP + H(+). It catalyses the reaction L-threonyl-[protein] + ATP = O-phospho-L-threonyl-[protein] + ADP + H(+). Its activity is regulated as follows. Serine/threonine-protein kinase activity is promoted by associated cyclins CCDN3 and CCNY and repressed by CDKN1A. Serine/threonine-protein kinase involved in the control of the eukaryotic cell cycle, whose activity is controlled by an associated cyclin. Acts as a cell-cycle regulator of Wnt signaling pathway during G2/M phase by mediating the phosphorylation of LRP6 at 'Ser-1490', leading to the activation of the Wnt signaling pathway. Acts as a regulator of cell cycle progression and cell proliferation via its interaction with CCDN3. Phosphorylates RB1 in vitro, however the relevance of such result remains to be confirmed in vivo. May also play a role in meiosis, neuron differentiation and may indirectly act as a negative regulator of insulin-responsive glucose transport. The sequence is that of Cyclin-dependent kinase 14 (CDK14) from Callithrix jacchus (White-tufted-ear marmoset).